A 289-amino-acid chain; its full sequence is Phosphatidylserine decarboxylase proenzyme (289 aa).

Active-site charge relay system; for autoendoproteolytic cleavage activity residues include D92, H149, and S254. S254 serves as the catalytic Schiff-base intermediate with substrate; via pyruvic acid; for decarboxylase activity. S254 is subject to Pyruvic acid (Ser); by autocatalysis.

The protein belongs to the phosphatidylserine decarboxylase family. PSD-B subfamily. Prokaryotic type I sub-subfamily. In terms of assembly, heterodimer of a large membrane-associated beta subunit and a small pyruvoyl-containing alpha subunit. Pyruvate serves as cofactor. Is synthesized initially as an inactive proenzyme. Formation of the active enzyme involves a self-maturation process in which the active site pyruvoyl group is generated from an internal serine residue via an autocatalytic post-translational modification. Two non-identical subunits are generated from the proenzyme in this reaction, and the pyruvate is formed at the N-terminus of the alpha chain, which is derived from the carboxyl end of the proenzyme. The autoendoproteolytic cleavage occurs by a canonical serine protease mechanism, in which the side chain hydroxyl group of the serine supplies its oxygen atom to form the C-terminus of the beta chain, while the remainder of the serine residue undergoes an oxidative deamination to produce ammonia and the pyruvoyl prosthetic group on the alpha chain. During this reaction, the Ser that is part of the protease active site of the proenzyme becomes the pyruvoyl prosthetic group, which constitutes an essential element of the active site of the mature decarboxylase.

It localises to the cell membrane. It carries out the reaction a 1,2-diacyl-sn-glycero-3-phospho-L-serine + H(+) = a 1,2-diacyl-sn-glycero-3-phosphoethanolamine + CO2. It participates in phospholipid metabolism; phosphatidylethanolamine biosynthesis; phosphatidylethanolamine from CDP-diacylglycerol: step 2/2. Functionally, catalyzes the formation of phosphatidylethanolamine (PtdEtn) from phosphatidylserine (PtdSer). The polypeptide is Phosphatidylserine decarboxylase proenzyme (Pseudomonas aeruginosa (strain UCBPP-PA14)).